The chain runs to 436 residues: MDVADPEPLGLFSEGELMSVGMDTFIHRIDSTEVIYQPRRKRAKLIGKYLMGDLLGEGSYGKVKEVLDSETLCRRAVKILKKKKLRRIPNGEANVKKEIQLLRRLRHRNVIQLVDVLYNEEKQKMYMVMEYCVCGMQEMLDSVPEKRFPVCQAHGYFRQLIDGLEYLHSQGIVHKDIKPGNLLLTTNGTLKISDLGVAEALHPFAVDDTCRTSQGSPAFQPPEIANGLDTFSGFKVDIWSAGVTLYNITTGLYPFEGDNIYKLFENIGRGDFTIPCDCGPPLSDLLRGMLEYEPAKRFSIRQIRQHSWFRKKHPLAEALVPIPPSPDTKDRWRSMTVVPYLEDLHGRAEEEEEEDLFDIEDGIIYTQDFTVPGQVLEEEVGQNGQSHSLPKAVCVNGTEPQLSSKVKPEGRPGTANPARKVCSSNKIRRLSACKQQ.

Position 31 is a phosphoserine (Ser-31). 2 positions are modified to N6-acetyllysine: Lys-44 and Lys-48. Positions 45–90 (LIGKYLMGDLLGEGSYGKVKEVLDSETLCRRAVKILKKKKLRRIPN) are sufficient for interaction with SIRT1. In terms of domain architecture, Protein kinase spans 49 to 309 (YLMGDLLGEG…IRQIRQHSWF (261 aa)). ATP is bound by residues 55–63 (LGEGSYGKV) and Lys-78. N6-acetyllysine is present on residues Lys-96 and Lys-97. The Proton acceptor role is filled by Asp-176. Thr-189 is subject to Phosphothreonine; by autocatalysis. N6-acetyllysine occurs at positions 296 and 311. Residue Ser-325 is modified to Phosphoserine. Thr-336 is modified (phosphothreonine; by autocatalysis). Thr-366 is modified (phosphothreonine; by ATM and autocatalysis). The disordered stretch occupies residues 398–421 (TEPQLSSKVKPEGRPGTANPARKV). Ser-403 is modified (phosphoserine). An N6-acetyllysine modification is found at Lys-420. Cys-422 carries the S-palmitoyl cysteine lipid modification. At Lys-426 the chain carries N6-acetyllysine. Ser-431 is modified (phosphoserine; by autocatalysis, PKA, PKC/PRKCZ and RPS6KA1). Cys-433 bears the Cysteine methyl ester mark. A lipid anchor (S-farnesyl cysteine) is attached at Cys-433. Residue Lys-434 is modified to N6-acetyllysine. The propeptide at 434–436 (KQQ) is removed in mature form.

The protein belongs to the protein kinase superfamily. CAMK Ser/Thr protein kinase family. LKB1 subfamily. As to quaternary structure, catalytic component of a trimeric complex composed of STK11/LKB1, STRAD (STRADA or STRADB) and CAB39/MO25 (CAB39/MO25alpha or CAB39L/MO25beta): the complex tethers STK11/LKB1 in the cytoplasm and stimulates its catalytic activity. Found in a ternary complex composed of SMAD4, STK11/LKB1 and STK11IP. Interacts with p53/TP53, SMAD4, STK11IP and WDR6. Interacts with NR4A1. Interacts with NISCH; this interaction may increase STK11 activity. Interacts with PTEN, leading to PTEN phosphorylation. Interacts with SIRT1; the interaction deacetylates STK11. Interacts with CDKN1A. It depends on Mg(2+) as a cofactor. Mn(2+) is required as a cofactor. Post-translationally, phosphorylated by ATM at Thr-366 following ionizing radiation (IR). Phosphorylation at Ser-431 by RPS6KA1 and/or some PKA is required to inhibit cell growth. Phosphorylation at Ser-431 is also required during neuronal polarization to mediate phosphorylation of BRSK1 and BRSK2. Phosphorylation by PKC/PRKCZ at Ser-399 in isoform 2 promotes metformin (or peroxynitrite)-induced nuclear export of STK11 and activation of AMPK. UV radiation-induced phosphorylation at Thr-366 mediates CDKN1A degradation. In terms of processing, acetylated. Deacetylation at Lys-48 enhances cytoplasmic localization and kinase activity in vitro. Widely expressed. In terms of tissue distribution, predominantly expressed in testis (at protein level). As to expression, expressed in adult brain and liver and absent from tissues derived from postnatal day 7.

Its subcellular location is the nucleus. It localises to the cytoplasm. The protein resides in the membrane. The protein localises to the mitochondrion. It catalyses the reaction L-seryl-[protein] + ATP = O-phospho-L-seryl-[protein] + ADP + H(+). The enzyme catalyses L-threonyl-[protein] + ATP = O-phospho-L-threonyl-[protein] + ADP + H(+). With respect to regulation, activated by forming a complex with STRAD (STRADA or STRADB) and CAB39/MO25 (CAB39/MO25alpha or CAB39L/MO25beta): STRADA (or STRADB)-binding promotes a conformational change of STK11/LKB1 in an active conformation, which is stabilized by CAB39/MO25alpha (or CAB39L/MO25beta) interacting with the STK11/LKB1 activation loop. Sequestration in the nucleus by NR4A1 prevents it from phosphorylating and activating cytoplasmic AMPK. In terms of biological role, tumor suppressor serine/threonine-protein kinase that controls the activity of AMP-activated protein kinase (AMPK) family members, thereby playing a role in various processes such as cell metabolism, cell polarity, apoptosis and DNA damage response. Acts by phosphorylating the T-loop of AMPK family proteins, thus promoting their activity: phosphorylates PRKAA1, PRKAA2, BRSK1, BRSK2, MARK1, MARK2, MARK3, MARK4, NUAK1, NUAK2, SIK1, SIK2, SIK3 and SNRK but not MELK. Also phosphorylates non-AMPK family proteins such as STRADA, PTEN and possibly p53/TP53. Acts as a key upstream regulator of AMPK by mediating phosphorylation and activation of AMPK catalytic subunits PRKAA1 and PRKAA2 and thereby regulates processes including: inhibition of signaling pathways that promote cell growth and proliferation when energy levels are low, glucose homeostasis in liver, activation of autophagy when cells undergo nutrient deprivation, and B-cell differentiation in the germinal center in response to DNA damage. Also acts as a regulator of cellular polarity by remodeling the actin cytoskeleton. Required for cortical neuron polarization by mediating phosphorylation and activation of BRSK1 and BRSK2, leading to axon initiation and specification. Involved in DNA damage response: interacts with p53/TP53 and recruited to the CDKN1A/WAF1 promoter to participate in transcription activation. Able to phosphorylate p53/TP53; the relevance of such result in vivo is however unclear and phosphorylation may be indirect and mediated by downstream STK11/LKB1 kinase NUAK1. Also acts as a mediator of p53/TP53-dependent apoptosis via interaction with p53/TP53: translocates to the mitochondrion during apoptosis and regulates p53/TP53-dependent apoptosis pathways. Regulates UV radiation-induced DNA damage response mediated by CDKN1A. In association with NUAK1, phosphorylates CDKN1A in response to UV radiation and contributes to its degradation which is necessary for optimal DNA repair. Has a role in spermiogenesis. The chain is Serine/threonine-protein kinase STK11 from Mus musculus (Mouse).